The sequence spans 301 residues: Cell division control protein 2 homolog 1 (301 aa).

A Protein kinase domain is found at 5-297 (YQRLEKIGEG…AAQALEHPYF (293 aa)). Residues 11-19 (IGEGSYGVV) and Lys34 each bind ATP. Ser15 bears the Phosphoserine mark. Phosphotyrosine is present on Tyr16. Residue Asp127 is the Proton acceptor of the active site. At Thr160 the chain carries Phosphothreonine; by CAK.

The protein belongs to the protein kinase superfamily. CMGC Ser/Thr protein kinase family. CDC2/CDKX subfamily. Forms a stable but non-covalent complex with a regulatory subunit and with a cyclin.

The enzyme catalyses L-seryl-[protein] + ATP = O-phospho-L-seryl-[protein] + ADP + H(+). It carries out the reaction L-threonyl-[protein] + ATP = O-phospho-L-threonyl-[protein] + ADP + H(+). With respect to regulation, phosphorylation at Ser-15 or Tyr-16 inactivates the enzyme, while phosphorylation at Thr-160 activates it. Probably involved in the control of the cell cycle. The chain is Cell division control protein 2 homolog 1 (CRK1) from Trypanosoma congolense.